We begin with the raw amino-acid sequence, 299 residues long: Diaminopimelate epimerase (299 aa).

Residues N15, Q47, and N67 each coordinate substrate. C76 functions as the Proton donor in the catalytic mechanism. Substrate contacts are provided by residues G77–N78, N163, N197, and E215–R216. The active-site Proton acceptor is C224. Residue G225 to S226 participates in substrate binding.

Belongs to the diaminopimelate epimerase family. As to quaternary structure, homodimer.

It localises to the cytoplasm. The enzyme catalyses (2S,6S)-2,6-diaminopimelate = meso-2,6-diaminopimelate. It participates in amino-acid biosynthesis; L-lysine biosynthesis via DAP pathway; DL-2,6-diaminopimelate from LL-2,6-diaminopimelate: step 1/1. In terms of biological role, catalyzes the stereoinversion of LL-2,6-diaminopimelate (L,L-DAP) to meso-diaminopimelate (meso-DAP), a precursor of L-lysine and an essential component of the bacterial peptidoglycan. The sequence is that of Diaminopimelate epimerase from Agrobacterium fabrum (strain C58 / ATCC 33970) (Agrobacterium tumefaciens (strain C58)).